Here is a 693-residue protein sequence, read N- to C-terminus: DNA-directed RNA polymerase subunit beta' (693 aa).

The Zn(2+) site is built by Cys-76, Cys-78, Cys-94, and Cys-97. Mg(2+) is bound by residues Asp-496, Asp-498, and Asp-500.

It belongs to the RNA polymerase beta' chain family. RpoC1 subfamily. In terms of assembly, in plastids the minimal PEP RNA polymerase catalytic core is composed of four subunits: alpha, beta, beta', and beta''. When a (nuclear-encoded) sigma factor is associated with the core the holoenzyme is formed, which can initiate transcription. Mg(2+) is required as a cofactor. Zn(2+) serves as cofactor.

It is found in the plastid. Its subcellular location is the chloroplast. The catalysed reaction is RNA(n) + a ribonucleoside 5'-triphosphate = RNA(n+1) + diphosphate. In terms of biological role, DNA-dependent RNA polymerase catalyzes the transcription of DNA into RNA using the four ribonucleoside triphosphates as substrates. This chain is DNA-directed RNA polymerase subunit beta', found in Nuphar advena (Common spatterdock).